Here is a 1578-residue protein sequence, read N- to C-terminus: DNA-directed RNA polymerase subunit beta' (1578 aa).

Zn(2+) is bound by residues Cys-101, Cys-103, Cys-115, and Cys-118. The Mg(2+) site is built by Asp-1286, Asp-1288, and Asp-1290.

This sequence belongs to the RNA polymerase beta' chain family. RpoC1 subfamily. In plastids the minimal PEP RNA polymerase catalytic core is composed of four subunits: alpha, beta, beta', and beta''. When a (nuclear-encoded) sigma factor is associated with the core the holoenzyme is formed, which can initiate transcription. Mg(2+) is required as a cofactor. Zn(2+) serves as cofactor.

The protein localises to the plastid. Its subcellular location is the chloroplast. It catalyses the reaction RNA(n) + a ribonucleoside 5'-triphosphate = RNA(n+1) + diphosphate. Functionally, DNA-dependent RNA polymerase catalyzes the transcription of DNA into RNA using the four ribonucleoside triphosphates as substrates. This chain is DNA-directed RNA polymerase subunit beta', found in Tupiella akineta (Green alga).